Reading from the N-terminus, the 372-residue chain is DNA-directed RNA polymerase subunit alpha (372 aa).

Residues 1–268 form an alpha N-terminal domain (alpha-NTD) region; that stretch reads MIFDEDSNSI…DQFQPFINFD (268 aa). Residues 280–372 form an alpha C-terminal domain (alpha-CTD) region; the sequence is KDTLPYDSNL…ESLSKQYSEE (93 aa).

It belongs to the RNA polymerase alpha chain family. Homodimer. The RNAP catalytic core consists of 2 alpha, 1 beta, 1 beta' and 1 omega subunit. When a sigma factor is associated with the core the holoenzyme is formed, which can initiate transcription.

The catalysed reaction is RNA(n) + a ribonucleoside 5'-triphosphate = RNA(n+1) + diphosphate. DNA-dependent RNA polymerase catalyzes the transcription of DNA into RNA using the four ribonucleoside triphosphates as substrates. This chain is DNA-directed RNA polymerase subunit alpha, found in Ehrlichia chaffeensis (strain ATCC CRL-10679 / Arkansas).